Reading from the N-terminus, the 375-residue chain is Alcohol dehydrogenase 1 (375 aa).

S2 carries the N-acetylserine modification. Positions 47, 68, 98, 101, 104, 112, and 175 each coordinate Zn(2+). NAD(+) is bound by residues 200-205 (GLGGVG), D224, and K229. N6-succinyllysine is present on K234. 293-295 (VGV) serves as a coordination point for NAD(+). K340 is subject to N6-succinyllysine. R370 is an NAD(+) binding site.

Belongs to the zinc-containing alcohol dehydrogenase family. As to quaternary structure, homodimer. The cofactor is Zn(2+).

The protein resides in the cytoplasm. It catalyses the reaction a primary alcohol + NAD(+) = an aldehyde + NADH + H(+). The catalysed reaction is a secondary alcohol + NAD(+) = a ketone + NADH + H(+). In Oryctolagus cuniculus (Rabbit), this protein is Alcohol dehydrogenase 1 (ADH1).